Reading from the N-terminus, the 413-residue chain is Inactive squalene synthase 2 (413 aa).

Gly2 is modified (N-acetylglycine). 2 helical membrane-spanning segments follow: residues 283–303 (AIFQ…ALCY) and 390–410 (AIFV…LKAN).

It belongs to the phytoene/squalene synthase family. The cofactor is Mg(2+). Requires Mn(2+) as cofactor. In terms of tissue distribution, mostly expressed in hypocotyls, leaves and cotyledons, and, to a lower extent, in stems.

The protein localises to the endoplasmic reticulum membrane. The polypeptide is Inactive squalene synthase 2 (Arabidopsis thaliana (Mouse-ear cress)).